We begin with the raw amino-acid sequence, 186 residues long: T-cell receptor-associated transmembrane adapter 1 (186 aa).

Residues 1-7 (MSGISGC) lie on the Extracellular side of the membrane. The chain crosses the membrane as a helical; Signal-anchor for type III membrane protein span at residues 8-28 (PFFLWGLLALLGLALVISLIF). Over 29-186 (NISHYVEKQR…LIRAKREPIN (158 aa)) the chain is Cytoplasmic. Serine 46 is modified (phosphoserine). Tyrosine 79 carries the post-translational modification Phosphotyrosine. The interaction with PIK3R1 stretch occupies residues 79 to 82 (YEQM). The disordered stretch occupies residues 116 to 140 (SVKGKRRKPRKQNTHFSDKDGDEQL). A compositionally biased stretch (basic residues) spans 118–128 (KGKRRKPRKQN). Residues 131–140 (FSDKDGDEQL) show a composition bias toward basic and acidic residues.

As to quaternary structure, homodimer; disulfide-linked. Interacts with CD3Z. When phosphorylated, interacts with PIK3R1. In terms of processing, phosphorylated on tyrosines by LCK or FYN upon TCR activation. As to expression, strongly expressed in thymus, and to a lesser extent in spleen, lymph node and peripheral blood lymphocytes. Present in T-cells and NK cells, but not B-cells (at protein level).

It is found in the cell membrane. Stabilizes the TCR (T-cell antigen receptor)/CD3 complex at the surface of T-cells. The sequence is that of T-cell receptor-associated transmembrane adapter 1 (TRAT1) from Homo sapiens (Human).